Reading from the N-terminus, the 246-residue chain is Orotidine 5'-phosphate decarboxylase (246 aa).

Substrate is bound by residues aspartate 22, lysine 44, aspartate 71–threonine 80, threonine 130, arginine 191, glutamine 201, glycine 221, and arginine 222. Lysine 73 (proton donor) is an active-site residue.

The protein belongs to the OMP decarboxylase family. Type 1 subfamily. Homodimer.

The enzyme catalyses orotidine 5'-phosphate + H(+) = UMP + CO2. It participates in pyrimidine metabolism; UMP biosynthesis via de novo pathway; UMP from orotate: step 2/2. Functionally, catalyzes the decarboxylation of orotidine 5'-monophosphate (OMP) to uridine 5'-monophosphate (UMP). The chain is Orotidine 5'-phosphate decarboxylase from Neisseria meningitidis serogroup C (strain 053442).